The sequence spans 443 residues: ATP-dependent protease ATPase subunit HslU (443 aa).

ATP-binding positions include I18 and 60–65 (GVGKTE). Positions 139–161 (ARDSGFDANPSEENNATRQKFRK) are disordered. Residues D256, E321, and R393 each coordinate ATP.

It belongs to the ClpX chaperone family. HslU subfamily. As to quaternary structure, a double ring-shaped homohexamer of HslV is capped on each side by a ring-shaped HslU homohexamer. The assembly of the HslU/HslV complex is dependent on binding of ATP.

It localises to the cytoplasm. ATPase subunit of a proteasome-like degradation complex; this subunit has chaperone activity. The binding of ATP and its subsequent hydrolysis by HslU are essential for unfolding of protein substrates subsequently hydrolyzed by HslV. HslU recognizes the N-terminal part of its protein substrates and unfolds these before they are guided to HslV for hydrolysis. This is ATP-dependent protease ATPase subunit HslU from Nitrosomonas eutropha (strain DSM 101675 / C91 / Nm57).